Here is a 116-residue protein sequence, read N- to C-terminus: Ribosome-binding factor A (116 aa).

The protein belongs to the RbfA family. Monomer. Binds 30S ribosomal subunits, but not 50S ribosomal subunits or 70S ribosomes.

It localises to the cytoplasm. In terms of biological role, one of several proteins that assist in the late maturation steps of the functional core of the 30S ribosomal subunit. Associates with free 30S ribosomal subunits (but not with 30S subunits that are part of 70S ribosomes or polysomes). Required for efficient processing of 16S rRNA. May interact with the 5'-terminal helix region of 16S rRNA. The polypeptide is Ribosome-binding factor A (Halalkalibacterium halodurans (strain ATCC BAA-125 / DSM 18197 / FERM 7344 / JCM 9153 / C-125) (Bacillus halodurans)).